Reading from the N-terminus, the 502-residue chain is 2,3-bisphosphoglycerate-independent phosphoglycerate mutase (502 aa).

2 residues coordinate Mn(2+): aspartate 12 and serine 62. Residue serine 62 is the Phosphoserine intermediate of the active site. Substrate contacts are provided by residues histidine 123, 152 to 153 (RD), arginine 183, arginine 189, 255 to 258 (RPDR), and lysine 329. The Mn(2+) site is built by aspartate 394, histidine 398, aspartate 435, histidine 436, and histidine 453.

The protein belongs to the BPG-independent phosphoglycerate mutase family. Monomer. Requires Mn(2+) as cofactor.

The enzyme catalyses (2R)-2-phosphoglycerate = (2R)-3-phosphoglycerate. It participates in carbohydrate degradation; glycolysis; pyruvate from D-glyceraldehyde 3-phosphate: step 3/5. Catalyzes the interconversion of 2-phosphoglycerate and 3-phosphoglycerate. The polypeptide is 2,3-bisphosphoglycerate-independent phosphoglycerate mutase (Malacoplasma penetrans (strain HF-2) (Mycoplasma penetrans)).